The primary structure comprises 168 residues: Photosystem I assembly protein Ycf3 (168 aa).

3 TPR repeats span residues 35–68 (AFTY…EIDP), 72–105 (SYIL…NPFL), and 120–153 (GEQA…TPGN).

It belongs to the Ycf3 family.

The protein localises to the plastid. It is found in the chloroplast thylakoid membrane. In terms of biological role, essential for the assembly of the photosystem I (PSI) complex. May act as a chaperone-like factor to guide the assembly of the PSI subunits. This Phaseolus vulgaris (Kidney bean) protein is Photosystem I assembly protein Ycf3.